Consider the following 277-residue polypeptide: Formamidopyrimidine-DNA glycosylase (277 aa).

Pro2 functions as the Schiff-base intermediate with DNA in the catalytic mechanism. Glu3 acts as the Proton donor in catalysis. Lys59 functions as the Proton donor; for beta-elimination activity in the catalytic mechanism. Positions 96, 115, and 158 each coordinate DNA. The FPG-type zinc finger occupies 243–277; it reads WVYGRGGNPCRRCGGEILREKRAGRSTHFCPRCQK. Catalysis depends on Arg267, which acts as the Proton donor; for delta-elimination activity.

It belongs to the FPG family. Monomer. Zn(2+) serves as cofactor.

It catalyses the reaction Hydrolysis of DNA containing ring-opened 7-methylguanine residues, releasing 2,6-diamino-4-hydroxy-5-(N-methyl)formamidopyrimidine.. It carries out the reaction 2'-deoxyribonucleotide-(2'-deoxyribose 5'-phosphate)-2'-deoxyribonucleotide-DNA = a 3'-end 2'-deoxyribonucleotide-(2,3-dehydro-2,3-deoxyribose 5'-phosphate)-DNA + a 5'-end 5'-phospho-2'-deoxyribonucleoside-DNA + H(+). Its function is as follows. Involved in base excision repair of DNA damaged by oxidation or by mutagenic agents. Acts as a DNA glycosylase that recognizes and removes damaged bases. Has a preference for oxidized purines, such as 7,8-dihydro-8-oxoguanine (8-oxoG). Has AP (apurinic/apyrimidinic) lyase activity and introduces nicks in the DNA strand. Cleaves the DNA backbone by beta-delta elimination to generate a single-strand break at the site of the removed base with both 3'- and 5'-phosphates. This Heliobacterium modesticaldum (strain ATCC 51547 / Ice1) protein is Formamidopyrimidine-DNA glycosylase.